The primary structure comprises 529 residues: Ectonucleoside triphosphate diphosphohydrolase 3 (529 aa).

The Cytoplasmic portion of the chain corresponds to 1–22; it reads MFTVMTRQPCEQAGFRALSRTP. Residues 23–43 traverse the membrane as a helical segment; that stretch reads AIVTLVVLLVSIVVLVTLTLI. Over 44-485 the chain is Extracellular; that stretch reads QIRHPQVLPP…PLIHLPIQPP (442 aa). Residue Asn-81 is glycosylated (N-linked (GlcNAc...) asparagine). Cysteines 92 and 116 form a disulfide. A glycan (N-linked (GlcNAc...) asparagine) is linked at Asn-149. The active-site Proton acceptor is Glu-182. 222-226 is an ATP binding site; that stretch reads GASTQ. N-linked (GlcNAc...) asparagine glycans are attached at residues Asn-238, Asn-284, and Asn-318. 3 cysteine pairs are disulfide-bonded: Cys-261-Cys-308, Cys-289-Cys-334, and Cys-347-Cys-353. Asn-381 and Asn-392 each carry an N-linked (GlcNAc...) asparagine glycan. Cys-399 and Cys-422 are joined by a disulfide. A glycan (N-linked (GlcNAc...) asparagine) is linked at Asn-454. The chain crosses the membrane as a helical span at residues 486-506; that stretch reads VFMGVLAFFTAIALLCLAFLL. The Cytoplasmic portion of the chain corresponds to 507 to 529; sequence YLCSSFRTKERSENAFDQAVDSD.

Belongs to the GDA1/CD39 NTPase family. The cofactor is Ca(2+). Mg(2+) is required as a cofactor.

The protein localises to the cell membrane. The catalysed reaction is a ribonucleoside 5'-triphosphate + 2 H2O = a ribonucleoside 5'-phosphate + 2 phosphate + 2 H(+). Its function is as follows. Catalyzes the hydrolysis of nucleoside triphosphates and diphosphates. Has a threefold preference for the hydrolysis of ATP and UTP over ADP and UDP. The chain is Ectonucleoside triphosphate diphosphohydrolase 3 from Mus musculus (Mouse).